Consider the following 365-residue polypeptide: MAFILSIGTSLPAYNVNQEKAAEFARYMFQHSFKDIDRLLSSFKNGQIHSRQFVKPIEWYKEGHSFEEKNQIYIEETLKHSRAAVRECLSHPEFFQEAIPYEKVEAVFFVSSTGLSTPSIEARLMNELPFSPYTKRIPIWGLGCAGGASGLARAAEYCKAYPEAFVLVISAELCSLTFQPEDKTKSNLIGTSLFGDGIAAALLCGEKADRRVSKLKLAPKIMDAQSVLMKQSEDVMGWDFTDQGFKVIFSRDIPTLVEKWLKTNVQIFLDKHKLSFHDISVFLAHPGGKKVIDAYIKSLGLSSEKLSSAQSILQKHGNMSSATILYVIKDHLQNGHKKEAERGLIGALGPGFSSELLLFSWEKGA.

Cysteine 144 is a catalytic residue.

It belongs to the thiolase-like superfamily. Chalcone/stilbene synthases family.

The catalysed reaction is (E)-4-coumaroyl-CoA + 3 malonyl-CoA + 3 H(+) = 2',4,4',6'-tetrahydroxychalcone + 3 CO2 + 4 CoA. In Bacillus subtilis (strain 168), this protein is Putative chalcone synthase (bcsA).